The following is a 425-amino-acid chain: Formyl-CoA:oxalate CoA-transferase (425 aa).

CoA is bound by residues 17–18 (QS), Arg-38, 72–75 (LDTK), 96–98 (NFG), Arg-104, and 136–139 (KVYE). Catalysis depends on Asp-168, which acts as the Nucleophile. Position 247 to 249 (247 to 249 (GGQ)) interacts with substrate.

This sequence belongs to the CoA-transferase III family. Frc subfamily. In terms of assembly, homodimer.

It carries out the reaction formyl-CoA + oxalate = oxalyl-CoA + formate. It functions in the pathway metabolic intermediate degradation; oxalate degradation; CO(2) and formate from oxalate: step 1/2. Its function is as follows. Involved in the catabolism of oxalate and in the adapatation to low pH via the induction of the oxalate-dependent acid tolerance response (ATR). Catalyzes the transfer of the CoA moiety from formyl-CoA to oxalate. The polypeptide is Formyl-CoA:oxalate CoA-transferase (Rhodopseudomonas palustris (strain ATCC BAA-98 / CGA009)).